The primary structure comprises 581 residues: Prolactin receptor (581 aa).

A signal peptide spans 1–24; the sequence is MKENAASRVLFILLLFLFASLLNG. Residues 25–237 are Extracellular-facing; the sequence is QSPPEKPKLI…NDFPVKDTSM (213 aa). Fibronectin type-III domains lie at 27–127 and 129–229; these read PPEK…IVEP and PPVN…IPND. Cys36 and Cys46 form a disulfide bridge. The N-linked (GlcNAc...) asparagine glycan is linked to Asn59. The cysteines at positions 75 and 86 are disulfide-linked. The N-linked (GlcNAc...) asparagine glycan is linked to Asn132. 2 residues coordinate Zn(2+): Asp211 and His212. The short motif at 215 to 219 is the WSXWS motif element; that stretch reads WSEWS. The chain crosses the membrane as a helical span at residues 238-258; that stretch reads WIFVGVLSAVICLIMVWAVAL. Over 259 to 581 the chain is Cytoplasmic; that stretch reads KGYSMVTCIL…SAKKAPPALP (323 aa). Residues 267-275 carry the Box 1 motif motif; sequence ILPPVPGPK. 2 stretches are compositionally biased toward basic and acidic residues: residues 323–349 and 375–388; these read QHLMPHPSKEHMEQGVKPMHLDPDTDS and HIPEGPEKLEDPET. 2 disordered regions span residues 323 to 388 and 462 to 492; these read QHLM…DPET and FKPSKTIETGGEGKAAKQSESEGYSSEPDQD.

This sequence belongs to the type I cytokine receptor family. Type 1 subfamily. As to quaternary structure, interacts with SMARCA1. Interacts with NEK3 and VAV2 and this interaction is prolactin-dependent. In terms of tissue distribution, expressed in all tissues examined; liver, pituitary, adrenal gland, ovary and fetal liver.

The protein resides in the membrane. This is a receptor for the anterior pituitary hormone prolactin. In Ovis aries (Sheep), this protein is Prolactin receptor (PRLR).